The following is a 395-amino-acid chain: Secreted aspartyl protease 1 (395 aa).

The first 20 residues, 1–20, serve as a signal peptide directing secretion; sequence MQLSIQAIIGFVVAAGLAVA. A propeptide spans 21 to 88 (removed in mature form); that stretch reads SELPSPMTVN…HLLLDLIDKR (68 aa). Asn-41 carries N-linked (GlcNAc...) asparagine glycosylation. Positions 105–391 constitute a Peptidase A1 domain; it reads WAGDVQFGQS…DMGKNRMGFA (287 aa). Catalysis depends on residues Asp-121 and Asp-283. Residues Cys-321 and Cys-352 are joined by a disulfide bond.

It belongs to the peptidase A1 family.

The protein resides in the secreted. Inhibited by pepstatin A. Functionally, dominant secreted aspartyl protease that has a clear preference for aromatic residues in the P1' position directly adjacent to the cleavage site and, in particular, Trp. In addition, it generally cleaves peptides containing Lys, Arg, Phe, Tyr, or Nle (norleucine) in the P1 position, Nle and Glu at P2, and Arg and Val at P2'. Has important roles in facilitating the interaction of the yeast with the external environment. Is able to rapidly hydrolyze Staphylococcus aureus protein A, an important S.aureus virulence factor involved in immune evasion and biofilm formation. Shows anti-biofilm properties and thus plays a role in inter-kingdom interactions, beneficial for host skin health. This Malassezia globosa (strain ATCC MYA-4612 / CBS 7966) (Dandruff-associated fungus) protein is Secreted aspartyl protease 1.